Consider the following 205-residue polypeptide: Large ribosomal subunit protein uL4 (205 aa).

This sequence belongs to the universal ribosomal protein uL4 family. In terms of assembly, part of the 50S ribosomal subunit.

In terms of biological role, one of the primary rRNA binding proteins, this protein initially binds near the 5'-end of the 23S rRNA. It is important during the early stages of 50S assembly. It makes multiple contacts with different domains of the 23S rRNA in the assembled 50S subunit and ribosome. Functionally, forms part of the polypeptide exit tunnel. The polypeptide is Large ribosomal subunit protein uL4 (Ruegeria sp. (strain TM1040) (Silicibacter sp.)).